Here is a 920-residue protein sequence, read N- to C-terminus: Vacuolar membrane protease (920 aa).

Residues 1-20 (MASSRAQRFNPIAFTPWPVT) are Cytoplasmic-facing. A helical transmembrane segment spans residues 21–41 (CITTIVYLALLIPILVINLVV). The Vacuolar segment spans residues 42 to 378 (PSAPETNPKG…AFAVFRLHTL (337 aa)). Asn53, Asn116, and Asn119 each carry an N-linked (GlcNAc...) asparagine glycan. The Zn(2+) site is built by His175 and Asp187. Glu221 acts as the Proton acceptor in catalysis. Glu222 lines the Zn(2+) pocket. N-linked (GlcNAc...) asparagine glycosylation is present at Asn238. Zn(2+)-binding residues include Glu247 and His306. The chain crosses the membrane as a helical span at residues 379–399 (FAISVALLVIAPLVIFITSVI). Residues 400–433 (LSKTDRMYLFSMSKSLEGTGDQVSLRGLRGFSRT) are Cytoplasmic-facing. The chain crosses the membrane as a helical span at residues 434–454 (PIILVIATTIPICLAYLLEKV). Residues 455-463 (NPYIVHSSQ) lie on the Vacuolar side of the membrane. A helical transmembrane segment spans residues 464–484 (FSVWSMMFSAWIFLAWFLACA). Topologically, residues 485 to 495 (ADFFRPSALHR) are cytoplasmic. A helical transmembrane segment spans residues 496–516 (AYSYTWIFVATWIMLVINTVY). Over 517-520 (ANQK) the chain is Vacuolar. Residues 521–541 (GIAAGYFLLFYFAGAFLATWI) traverse the membrane as a helical segment. Residues 542-659 (SYLELFALPR…TLPRWTWVLQ (118 aa)) are Cytoplasmic-facing. The segment at 556-605 (ARQTTGRRPSSLSSRLLTSSADELRSNASPSTAEFPGAAGEDTDPTESTS) is disordered. Over residues 559–575 (TTGRRPSSLSSRLLTSS) the composition is skewed to low complexity. The chain crosses the membrane as a helical span at residues 660 to 680 (LLLLAPIVLILVGQLALFLTA). Residues 681-693 (SMCQVGSDGVSTF) are Vacuolar-facing. A helical membrane pass occupies residues 694-714 (VVYLACAVFTTLLCIPLFPLI). The Cytoplasmic portion of the chain corresponds to 715-720 (HRFTYH). A helical transmembrane segment spans residues 721 to 741 (IPTFLFLVFIGTLIYNLVAFP). The Vacuolar portion of the chain corresponds to 742 to 920 (FSPANRLKTF…VEASHSFTIQ (179 aa)). N-linked (GlcNAc...) asparagine glycosylation is found at Asn760, Asn788, and Asn832.

Belongs to the peptidase M28 family. Requires Zn(2+) as cofactor.

The protein localises to the vacuole membrane. May be involved in vacuolar sorting and osmoregulation. This chain is Vacuolar membrane protease, found in Ajellomyces capsulatus (strain H143) (Darling's disease fungus).